Here is a 684-residue protein sequence, read N- to C-terminus: TBC1 domain family member 23 (684 aa).

Residues 44–225 (PLPAELRAKV…AIWDGYLQQA (182 aa)) enclose the Rab-GAP TBC domain. Residue Ser-300 is modified to Phosphoserine. Residues 334 to 446 (EGVRFFVVDC…LQQHLADINV (113 aa)) form the Rhodanese domain. Residues Ser-469, Ser-474, and Ser-507 each carry the phosphoserine modification. Residue Thr-514 is modified to Phosphothreonine. The segment at 514-558 (TPVDRHVSSSDRVGKPYRGVKPVFSIGDEEEYDTDEIDSSSMSDD) is may mediate the interaction with C17orf75, FAM91A1 and WDR11. The tract at residues 514–684 (TPVDRHVSSS…IMKVLDALES (171 aa)) is may mediate the interaction with WASHC1. Ser-556 bears the Phosphoserine mark. A may mediate the interaction with FKBP15 and WASHC2; required for endosome to Golgi trafficking region spans residues 559-684 (DRKEVVNIQT…IMKVLDALES (126 aa)).

Directly interacts with GOLGA1 and GOLGA4. Interacts with FAM91A1, C17ORF75 and WDR11; the interaction recruits TBC1D23 to AP-1-derived vesicles. Directly interacts with WASHC1 and WASHC2/FAM21. Interacts with FKBP15.

The protein localises to the golgi apparatus. Its subcellular location is the trans-Golgi network. It localises to the cytoplasmic vesicle. Putative Rab GTPase-activating protein which plays a role in vesicular trafficking. Involved in endosome-to-Golgi trafficking. Acts as a bridging protein by binding simultaneously to golgins, including GOLGA1 and GOLGA4, located at the trans-Golgi, and to the WASH complex, located on endosome-derived vesicles. Together with WDR11 complex facilitates the golgin-mediated capture of vesicles generated using AP-1. Plays a role in brain development, including in cortical neuron positioning. May also be important for neurite outgrowth, possibly through its involvement in membrane trafficking and cargo delivery, 2 processes which are essential for axonal and dendritic growth. May act as a general inhibitor of innate immunity signaling, strongly inhibiting multiple TLR and dectin/CLEC7A-signaling pathways. Does not alter initial activation events, but instead affects maintenance of inflammatory gene expression several hours after bacterial lipopolysaccharide (LPS) challenge. This is TBC1 domain family member 23 (Tbc1d23) from Mus musculus (Mouse).